The sequence spans 315 residues: MSHSLRIIFAGTPDFAARHLEALLASDHQIVGVFTQPDRPSGRGNKLTPSPVKALALQHDLPVFQPASLRPEENQRLVASLQADVMVVVAYGLILPQAVLDMPRLGCVNVHGSLLPRWRGAAPIQRALWAGDSETGVTIMQMDAGLDTGDMLLKLSCLITQDDTSATLYDKLSALGPQGLLTTLAQLADGRAQAQQQDDALACYAEKLSKEEARLDWQLPAEQLARCVRAFNPWPVSFFMLEGQPVKVWGANVLHQESDAQPGTIVGADKQGIAVATAQGILLLTQLQPAGKKSMAARDLLNSRKESFLAGTLLD.

Position 113-116 (113-116 (SLLP)) interacts with (6S)-5,6,7,8-tetrahydrofolate.

The protein belongs to the Fmt family.

The catalysed reaction is L-methionyl-tRNA(fMet) + (6R)-10-formyltetrahydrofolate = N-formyl-L-methionyl-tRNA(fMet) + (6S)-5,6,7,8-tetrahydrofolate + H(+). Attaches a formyl group to the free amino group of methionyl-tRNA(fMet). The formyl group appears to play a dual role in the initiator identity of N-formylmethionyl-tRNA by promoting its recognition by IF2 and preventing the misappropriation of this tRNA by the elongation apparatus. The sequence is that of Methionyl-tRNA formyltransferase from Edwardsiella ictaluri (strain 93-146).